Reading from the N-terminus, the 270-residue chain is Elongation factor Ts (270 aa).

Residues 77-80 (TDFV) form an involved in Mg(2+) ion dislocation from EF-Tu region.

The protein belongs to the EF-Ts family.

It is found in the cytoplasm. Associates with the EF-Tu.GDP complex and induces the exchange of GDP to GTP. It remains bound to the aminoacyl-tRNA.EF-Tu.GTP complex up to the GTP hydrolysis stage on the ribosome. The chain is Elongation factor Ts from Nocardioides sp. (strain ATCC BAA-499 / JS614).